The following is a 1533-amino-acid chain: Glycogen debranching enzyme (1533 aa).

Phosphoserine is present on Ser64. Active-site residues include Asp527, His530, and Asp628.

The protein belongs to the glycogen debranching enzyme family. As to quaternary structure, monomer. Interacts with NHLRC1/malin. In terms of processing, ubiquitinated. As to expression, ubiquitous. Expressed in striated skeletal muscle, heart, liver, spleen, skin, spinal cord, lung, kidney and testicle.

It is found in the cytoplasm. It catalyses the reaction Transfers a segment of a (1-&gt;4)-alpha-D-glucan to a new position in an acceptor, which may be glucose or a (1-&gt;4)-alpha-D-glucan.. The enzyme catalyses Hydrolysis of (1-&gt;6)-alpha-D-glucosidic branch linkages in glycogen phosphorylase limit dextrin.. Functionally, multifunctional enzyme acting as 1,4-alpha-D-glucan:1,4-alpha-D-glucan 4-alpha-D-glycosyltransferase and amylo-1,6-glucosidase in glycogen degradation. This chain is Glycogen debranching enzyme, found in Equus caballus (Horse).